Here is a 141-residue protein sequence, read N- to C-terminus: Large ribosomal subunit protein uL11 (141 aa).

Belongs to the universal ribosomal protein uL11 family. In terms of assembly, part of the ribosomal stalk of the 50S ribosomal subunit. Interacts with L10 and the large rRNA to form the base of the stalk. L10 forms an elongated spine to which L12 dimers bind in a sequential fashion forming a multimeric L10(L12)X complex. In terms of processing, one or more lysine residues are methylated.

Its function is as follows. Forms part of the ribosomal stalk which helps the ribosome interact with GTP-bound translation factors. The protein is Large ribosomal subunit protein uL11 of Syntrophus aciditrophicus (strain SB).